The chain runs to 505 residues: Cobyric acid synthase (505 aa).

The GATase cobBQ-type domain occupies 260-453; that stretch reads RIAVAAIYFP…FHGIIDEPEV (194 aa). Catalysis depends on Cys341, which acts as the Nucleophile. The active site involves His445.

This sequence belongs to the CobB/CobQ family. CobQ subfamily.

It participates in cofactor biosynthesis; adenosylcobalamin biosynthesis. Functionally, catalyzes amidations at positions B, D, E, and G on adenosylcobyrinic A,C-diamide. NH(2) groups are provided by glutamine, and one molecule of ATP is hydrogenolyzed for each amidation. This chain is Cobyric acid synthase, found in Chlorobium phaeobacteroides (strain DSM 266 / SMG 266 / 2430).